A 312-amino-acid chain; its full sequence is Acetyl-coenzyme A carboxylase carboxyl transferase subunit alpha (312 aa).

Positions 36-286 (NLEKEISKTY…ADYVKKSLNE (251 aa)) constitute a CoA carboxyltransferase C-terminal domain.

This sequence belongs to the AccA family. Acetyl-CoA carboxylase is a heterohexamer composed of biotin carboxyl carrier protein (AccB), biotin carboxylase (AccC) and two subunits each of ACCase subunit alpha (AccA) and ACCase subunit beta (AccD).

Its subcellular location is the cytoplasm. It carries out the reaction N(6)-carboxybiotinyl-L-lysyl-[protein] + acetyl-CoA = N(6)-biotinyl-L-lysyl-[protein] + malonyl-CoA. The protein operates within lipid metabolism; malonyl-CoA biosynthesis; malonyl-CoA from acetyl-CoA: step 1/1. Component of the acetyl coenzyme A carboxylase (ACC) complex. First, biotin carboxylase catalyzes the carboxylation of biotin on its carrier protein (BCCP) and then the CO(2) group is transferred by the carboxyltransferase to acetyl-CoA to form malonyl-CoA. The protein is Acetyl-coenzyme A carboxylase carboxyl transferase subunit alpha of Campylobacter jejuni (strain RM1221).